A 141-amino-acid polypeptide reads, in one-letter code: Hemoglobin subunit alpha-A (141 aa).

Positions 1–141 (VLSAADKTNV…VGAVLTAKYR (141 aa)) constitute a Globin domain. H58 is an O2 binding site. H87 lines the heme b pocket.

Belongs to the globin family. Heterotetramer of two alpha chains and two beta chains. Red blood cells.

In terms of biological role, involved in oxygen transport from the lung to the various peripheral tissues. In Cygnus olor (Mute swan), this protein is Hemoglobin subunit alpha-A (HBAA).